The following is a 235-amino-acid chain: Serine/arginine-rich splicing factor 7 (235 aa).

Residues 11-84 (TKVYVGNLGT…SRVRVELSTG (74 aa)) form the RRM domain. K24 is subject to N6-acetyllysine; alternate. Residue K24 forms a Glycyl lysine isopeptide (Lys-Gly) (interchain with G-Cter in SUMO2); alternate linkage. S32 carries the phosphoserine modification. The interval 81–98 (LSTGMPRRSRFDRPPARR) is sufficient for interaction with NXF1. The segment at 104–120 (DRCYECGEKGHYAYDCH) adopts a CCHC-type zinc-finger fold. Over residues 123–180 (SRRRRSRSRSRSHSRSRGRRYSRSRSRSRGRRSRSASPRRSRSVSLRRSRSASLRRSR) the composition is skewed to basic residues. The segment at 123 to 235 (SRRRRSRSRS…RRSASPERVD (113 aa)) is disordered. 4 repeat units span residues 153-160 (RRSRSASP), 161-168 (RRSRSVSL), 169-176 (RRSRSASL), and 177-184 (RRSRSGSI). The tract at residues 153–223 (RRSRSASPRR…SPKRSRSPSG (71 aa)) is 6 X 8 AA repeats of R-R-S-R-S-X-S-X. Phosphoserine is present on residues S163, S165, and S167. 5 positions are modified to phosphoserine: S181, S183, S189, S191, and S193. Positions 187-219 (SRSRSRSRSRSRSLSRPRSSRSKSRSPSPKRSR) are enriched in basic residues. The stretch at 208-215 (SKSRSPSP) is one 5; approximate repeat. The stretch at 216-223 (KRSRSPSG) is one 6; approximate repeat. S228 and S230 each carry phosphoserine.

It belongs to the splicing factor SR family. As to quaternary structure, found in large molecular weight complexes containing CCNL1 and the p110 isoforms of either CDC2L1 or CDC2L2. Interacts with CCNL2 and CPSF6. Interacts with NXF1. Interacts with YTHDC1. Post-translationally, extensively phosphorylated on serine residues in the RS domain.

The protein resides in the nucleus. It localises to the cytoplasm. Functionally, required for pre-mRNA splicing. Represses the splicing of MAPT/Tau exon 10. May function as export adapter involved in mRNA nuclear export such as of histone H2A. Binds mRNA which is thought to be transferred to the NXF1-NXT1 heterodimer for export (TAP/NXF1 pathway); enhances NXF1-NXT1 RNA-binding activity. RNA-binding is semi-sequence specific. In Bos taurus (Bovine), this protein is Serine/arginine-rich splicing factor 7 (SRSF7).